The sequence spans 393 residues: MSIKTVKDFSSFAGKRALVRCDFNVPLKEGSISDDTRIRAALSTIEYLKERGARIVLVSHLGRPDGKKNSKYSLKPVANRLSELLGQDVKMLSDCIGSEVVNSTLQMKDGDVVLLENVRFYAEEEKNDKNFAKKLSENGDVFVNDAFGAAHRAHASTVGVADYLPSVGGFLMEKEDKFLGGILKNPERPFVSIIGGSKVSSKIAVLESLLSKSNVVVIGGGMAYTFLHSEGYSIGKSLLEDEYIGIASSFLKKAKELGVKVILPLDHIVADDFNKNSIPEYINSFNIPENKIGMDIGANTLKEIEKVVKTAKTIIWNGPLGVFEFDSFSKGTAKVAEMVASCSGLTVVGGGDSVAAVNKFNLSDKITHVSTGGGASLEYLEGRILPGIKVLEN.

Substrate contacts are provided by residues 22 to 24, R37, 60 to 63, R119, and R152; these read DFN and HLGR. Residues K202, G293, E324, and 350 to 353 contribute to the ATP site; that span reads GGDS.

Belongs to the phosphoglycerate kinase family. As to quaternary structure, monomer.

The protein resides in the cytoplasm. It carries out the reaction (2R)-3-phosphoglycerate + ATP = (2R)-3-phospho-glyceroyl phosphate + ADP. It participates in carbohydrate degradation; glycolysis; pyruvate from D-glyceraldehyde 3-phosphate: step 2/5. The protein is Phosphoglycerate kinase of Borreliella burgdorferi (strain ZS7) (Borrelia burgdorferi).